A 289-amino-acid polypeptide reads, in one-letter code: 4-hydroxy-tetrahydrodipicolinate synthase (289 aa).

Threonine 42 lines the pyruvate pocket. The Proton donor/acceptor role is filled by tyrosine 129. The active-site Schiff-base intermediate with substrate is the lysine 157. Isoleucine 198 provides a ligand contact to pyruvate.

The protein belongs to the DapA family. As to quaternary structure, homotetramer; dimer of dimers.

It localises to the cytoplasm. It carries out the reaction L-aspartate 4-semialdehyde + pyruvate = (2S,4S)-4-hydroxy-2,3,4,5-tetrahydrodipicolinate + H2O + H(+). The protein operates within amino-acid biosynthesis; L-lysine biosynthesis via DAP pathway; (S)-tetrahydrodipicolinate from L-aspartate: step 3/4. Catalyzes the condensation of (S)-aspartate-beta-semialdehyde [(S)-ASA] and pyruvate to 4-hydroxy-tetrahydrodipicolinate (HTPA). This is 4-hydroxy-tetrahydrodipicolinate synthase from Chlamydia caviae (strain ATCC VR-813 / DSM 19441 / 03DC25 / GPIC) (Chlamydophila caviae).